The sequence spans 237 residues: Small ribosomal subunit protein uS5 (237 aa).

The tract at residues 1 to 59 (MADETNLEGVAAVEATGGEPQREGRGRGRGRGGNDRGGERGGRGRRDDRRGRGNNDEEG) is disordered. Positions 20–55 (PQREGRGRGRGRGGNDRGGERGGRGRRDDRRGRGNN) are enriched in basic and acidic residues. The 64-residue stretch at 63-126 (LIEKLVHINR…AAAKRAMVRV (64 aa)) folds into the S5 DRBM domain.

Belongs to the universal ribosomal protein uS5 family. As to quaternary structure, part of the 30S ribosomal subunit. Contacts proteins S4 and S8.

Its function is as follows. With S4 and S12 plays an important role in translational accuracy. Located at the back of the 30S subunit body where it stabilizes the conformation of the head with respect to the body. The polypeptide is Small ribosomal subunit protein uS5 (Novosphingobium aromaticivorans (strain ATCC 700278 / DSM 12444 / CCUG 56034 / CIP 105152 / NBRC 16084 / F199)).